A 412-amino-acid chain; its full sequence is Peptidase T (412 aa).

Histidine 78 lines the Zn(2+) pocket. Residue aspartate 80 is part of the active site. Aspartate 140 is a binding site for Zn(2+). The active-site Proton acceptor is the glutamate 174. Glutamate 175, aspartate 197, and histidine 379 together coordinate Zn(2+).

Belongs to the peptidase M20B family. Requires Zn(2+) as cofactor.

It is found in the cytoplasm. It carries out the reaction Release of the N-terminal residue from a tripeptide.. Its function is as follows. Cleaves the N-terminal amino acid of tripeptides. The sequence is that of Peptidase T from Staphylococcus epidermidis (strain ATCC 12228 / FDA PCI 1200).